A 569-amino-acid chain; its full sequence is MMLAIDMTINENQGTRSNLESPTLSCSSKGAMQERDVMFTDHNTFNITNNKSRPGSLMKSMKRKDVYEFDEDNEFEFEMGSLIHKPSRAHSLGGTSEPVSDDHKDCMEATRQLLENSPLSSVVVKTCSDHASKRKIARSSSDDSESKVESTNSFNAKKRKDAWTEEHEKWFQARIDELLTIRSISREQMIEILEDEHAGSRLQGFLESVASFLNRKENSLLKYMRAFFQVAGYEKIDIGSLAAEEDSQLNFSLEDAQVIQKVVLSYCNNEGVDLQEFGFRMSSSSLRHTNINFLYNELRELLPTSISRKGIIRYLKEIYKPLDPKDRNAWEESELKKLYTLVEQEGTRWNSIANKLGTSPAACMSQWRFVVGTSTQETIDRRKLWTNEEEAKLLDLVKSSYRSSFHTKKMTSLFTHNNHTTSNIQREIPASDSIAWHSISKKLGTKSPESCRKQYEKTIASYSSNQRQEEDQGKKRKKRKKKKSKGKRKFYVADSLKLLEHVQRQCGEAISINAIDWKGIVKQMPKWSEEELRAQATNLVASVRGWKKTRLSESVRIAITDLKSLPPDV.

2 disordered regions span residues 1–26 and 133–159; these read MMLAIDMTINENQGTRSNLESPTLSC and KRKIARSSSDDSESKVESTNSFNAKKR. Over residues 9–26 the composition is skewed to polar residues; it reads INENQGTRSNLESPTLSC. Phosphoserine is present on S21. Myb-like domains follow at residues 322-371 and 377-459; these read LDPK…RFVV and ETID…EKTI. The disordered stretch occupies residues 459 to 487; it reads IASYSSNQRQEEDQGKKRKKRKKKKSKGK. Positions 474–487 are enriched in basic residues; the sequence is KKRKKRKKKKSKGK.

Its subcellular location is the nucleus. The polypeptide is DNA-binding protein eta2 (eta2) (Schizosaccharomyces pombe (strain 972 / ATCC 24843) (Fission yeast)).